The primary structure comprises 325 residues: Golgi to ER traffic protein 4 homolog A (325 aa).

2 disordered regions span residues M1 to Q22 and S306 to D325. The segment covering G307 to E317 has biased composition (acidic residues).

It belongs to the GET4 family. In terms of assembly, component of the bag6/bat3 complex.

It is found in the cytoplasm. The protein localises to the cytosol. Functionally, as part of a cytosolic protein quality control complex, the bag6/bat3 complex, maintains misfolded and hydrophobic patches-containing proteins in a soluble state and participates in their proper delivery to the endoplasmic reticulum or alternatively can promote their sorting to the proteasome where they undergo degradation. The bag6/bat3 complex is involved in the post-translational delivery of tail-anchored/type II transmembrane proteins to the endoplasmic reticulum membrane. Similarly, the bag6/bat3 complex also functions as a sorting platform for proteins of the secretory pathway that are mislocalized to the cytosol either delivering them to the proteasome for degradation or to the endoplasmic reticulum. The bag6/bat3 complex also plays a role in the endoplasmic reticulum-associated degradation (ERAD), a quality control mechanism that eliminates unwanted proteins of the endoplasmic reticulum through their retrotranslocation to the cytosol and their targeting to the proteasome. It maintains these retrotranslocated proteins in an unfolded yet soluble state condition in the cytosol to ensure their proper delivery to the proteasome. In Xenopus laevis (African clawed frog), this protein is Golgi to ER traffic protein 4 homolog A (get4-a).